The following is a 222-amino-acid chain: uncharacterized protein (222 aa).

Residues 142 to 222 (ARRGGCVHPP…LPDPPSAGHL (81 aa)) are disordered. Over residues 160 to 169 (QSRSISSRRA) the composition is skewed to low complexity. Residues 182–196 (PRRRPHRHRTRPQTR) are compositionally biased toward basic residues.

It belongs to the Rv1128c/1148c/1588c/1702c/1945/3466 family.

This is an uncharacterized protein from Mycobacterium tuberculosis (strain CDC 1551 / Oshkosh).